Consider the following 542-residue polypeptide: CTP synthase (542 aa).

The tract at residues 1 to 265 (MTKYIFVTGG…LKPISKELSL (265 aa)) is amidoligase domain. CTP is bound at residue serine 13. Residue serine 13 coordinates UTP. Residues 14 to 19 (SLGKGI) and aspartate 71 contribute to the ATP site. Positions 71 and 139 each coordinate Mg(2+). CTP is bound by residues 146-148 (DIE), 186-191 (KSKPTQ), and lysine 222. Residues 186-191 (KSKPTQ) and lysine 222 each bind UTP. Positions 290 to 541 (VLGFVGKYLE…VEATLAISQE (252 aa)) constitute a Glutamine amidotransferase type-1 domain. L-glutamine is bound at residue glycine 352. The active-site Nucleophile; for glutamine hydrolysis is the cysteine 379. L-glutamine-binding positions include 380-383 (LGMQ), glutamate 403, and arginine 471. Active-site residues include histidine 514 and glutamate 516.

It belongs to the CTP synthase family. Homotetramer.

It catalyses the reaction UTP + L-glutamine + ATP + H2O = CTP + L-glutamate + ADP + phosphate + 2 H(+). It carries out the reaction L-glutamine + H2O = L-glutamate + NH4(+). The catalysed reaction is UTP + NH4(+) + ATP = CTP + ADP + phosphate + 2 H(+). Its pathway is pyrimidine metabolism; CTP biosynthesis via de novo pathway; CTP from UDP: step 2/2. Allosterically activated by GTP, when glutamine is the substrate; GTP has no effect on the reaction when ammonia is the substrate. The allosteric effector GTP functions by stabilizing the protein conformation that binds the tetrahedral intermediate(s) formed during glutamine hydrolysis. Inhibited by the product CTP, via allosteric rather than competitive inhibition. Functionally, catalyzes the ATP-dependent amination of UTP to CTP with either L-glutamine or ammonia as the source of nitrogen. Regulates intracellular CTP levels through interactions with the four ribonucleotide triphosphates. This Sulfurimonas denitrificans (strain ATCC 33889 / DSM 1251) (Thiomicrospira denitrificans (strain ATCC 33889 / DSM 1251)) protein is CTP synthase.